Consider the following 147-residue polypeptide: 3-dehydroquinate dehydratase (147 aa).

Tyrosine 23 functions as the Proton acceptor in the catalytic mechanism. Substrate-binding residues include asparagine 74, histidine 80, and aspartate 87. Histidine 100 functions as the Proton donor in the catalytic mechanism. Substrate is bound by residues 101–102 (LS) and arginine 111.

The protein belongs to the type-II 3-dehydroquinase family. In terms of assembly, homododecamer.

The enzyme catalyses 3-dehydroquinate = 3-dehydroshikimate + H2O. The protein operates within metabolic intermediate biosynthesis; chorismate biosynthesis; chorismate from D-erythrose 4-phosphate and phosphoenolpyruvate: step 3/7. Its function is as follows. Catalyzes a trans-dehydration via an enolate intermediate. The protein is 3-dehydroquinate dehydratase of Clostridium botulinum (strain Okra / Type B1).